The sequence spans 131 residues: Large ribosomal subunit protein bL12 (131 aa).

It belongs to the bacterial ribosomal protein bL12 family. In terms of assembly, homodimer. Part of the ribosomal stalk of the 50S ribosomal subunit. Forms a multimeric L10(L12)X complex, where L10 forms an elongated spine to which 2 to 4 L12 dimers bind in a sequential fashion. Binds GTP-bound translation factors.

Functionally, forms part of the ribosomal stalk which helps the ribosome interact with GTP-bound translation factors. Is thus essential for accurate translation. This chain is Large ribosomal subunit protein bL12, found in Prochlorococcus marinus (strain NATL2A).